Consider the following 56-residue polypeptide: Ribosome modulation factor (56 aa).

It belongs to the ribosome modulation factor family.

The protein localises to the cytoplasm. In terms of biological role, during stationary phase, converts 70S ribosomes to an inactive dimeric form (100S ribosomes). The chain is Ribosome modulation factor from Serratia proteamaculans (strain 568).